The chain runs to 589 residues: Probable galacturonosyltransferase 6 (589 aa).

Over 1-6 (MKQIRR) the chain is Cytoplasmic. A helical; Signal-anchor for type II membrane protein membrane pass occupies residues 7–27 (WQRILILALLSISVFAPLIFV). Topologically, residues 28–589 (SNRLKSITPV…TYLQQCNLQA (562 aa)) are lumenal. N-linked (GlcNAc...) asparagine glycans are attached at residues asparagine 83 and asparagine 126. Positions 127–151 (KTDFKPPLSKGEKNTRVQPDRATDV) are disordered. Residues 136-151 (KGEKNTRVQPDRATDV) show a composition bias toward basic and acidic residues. N-linked (GlcNAc...) asparagine glycans are attached at residues asparagine 317 and asparagine 454.

The protein belongs to the glycosyltransferase 8 family. In terms of tissue distribution, expressed in roots, inflorescences, siliques, leaves and stems.

Its subcellular location is the golgi apparatus membrane. It functions in the pathway glycan metabolism; pectin biosynthesis. Its function is as follows. Probably involved in pectin biosynthesis in cell walls. This Arabidopsis thaliana (Mouse-ear cress) protein is Probable galacturonosyltransferase 6 (GAUT6).